Here is a 299-residue protein sequence, read N- to C-terminus: uncharacterized protein (299 aa).

The helical transmembrane segment at 4 to 20 (LFFIFVMLIVLLCGCTS) threads the bilayer.

The protein resides in the membrane. This is an uncharacterized protein from Methanocaldococcus jannaschii (strain ATCC 43067 / DSM 2661 / JAL-1 / JCM 10045 / NBRC 100440) (Methanococcus jannaschii).